A 528-amino-acid chain; its full sequence is MADQNFLNEVSDRRTFAIISHPDAGKTTITEKLLLLGQLIQTAGSVKGRKGDKHATSDWMAMEKQRGISITSSVMQFPYKDRIVNLLDTPGHEDFSEDTYRTLTAVDSVLMIIDGAKGVEDRTIKLMDVCRLRDTPILTFINKMDRDIRDPIELLDEVEEVLKIAAAPITWPIGMSDFFKGVYNLYTDTIHVFVRGRGHTLMDDIRIEGLQSNEAKELLGDDWESYVDEIELVRGASHEFDHDAYLRGELTPVFFGTALSNFGVREMLDGFVEWAPAPIDRETNSRKVEAKEEKFSGFIFKIQANMDPKHRDRIAFMRVCSGTYSRGMKMRHCRIGKDIKVTDAVSFTAGDREGVEEAFSGDIIGLHNHGTIQIGDTFTEGEDLKFTGIPHFAPELFRRVRLKDPMKMKALQKGLQQLSEEGSTQLFMPQRNNELIVGAVGQLQYEVVAYRLKDEYKVECIYEAVNVNSARWVECDDAKKFEEFKNKCRDNLAIDGGGHLTYLAPTRVNLMMAEEKWPQVRFHSTREH.

The tr-type G domain maps to 11–279 (SDRRTFAIIS…GFVEWAPAPI (269 aa)). Residues 20–27 (SHPDAGKT), 88–92 (DTPGH), and 142–145 (NKMD) contribute to the GTP site.

Belongs to the TRAFAC class translation factor GTPase superfamily. Classic translation factor GTPase family. PrfC subfamily.

The protein localises to the cytoplasm. Its function is as follows. Increases the formation of ribosomal termination complexes and stimulates activities of RF-1 and RF-2. It binds guanine nucleotides and has strong preference for UGA stop codons. It may interact directly with the ribosome. The stimulation of RF-1 and RF-2 is significantly reduced by GTP and GDP, but not by GMP. This chain is Peptide chain release factor 3, found in Marinomonas sp. (strain MWYL1).